A 156-amino-acid chain; its full sequence is RNA polymerase sigma factor SigS (156 aa).

The Polymerase core binding signature appears at 29-44 (EYYQLLLIKMWQLSQI). Residues 126-145 (QFEIAEIMSLSLSTIKLIKM) constitute a DNA-binding region (H-T-H motif).

Belongs to the sigma-70 factor family.

Its function is as follows. Sigma factors are initiation factors that promote the attachment of RNA polymerase to specific initiation sites and are then released. Sigma-S contributes to the protection against external stress, thus playing a role in cellular fitness and survival. This is RNA polymerase sigma factor SigS (sigS) from Staphylococcus aureus (strain COL).